The sequence spans 221 residues: Probable septum site-determining protein MinC (221 aa).

It belongs to the MinC family. Interacts with MinD and FtsZ.

In terms of biological role, cell division inhibitor that blocks the formation of polar Z ring septums. Rapidly oscillates between the poles of the cell to destabilize FtsZ filaments that have formed before they mature into polar Z rings. Prevents FtsZ polymerization. The chain is Probable septum site-determining protein MinC from Aliivibrio fischeri (strain ATCC 700601 / ES114) (Vibrio fischeri).